The sequence spans 278 residues: Shikimate dehydrogenase (NADP(+)) (278 aa).

Residues 19-21 and Thr-66 each bind shikimate; that span reads SRS. Lys-70 serves as the catalytic Proton acceptor. Shikimate-binding residues include Asn-91 and Asp-106. NADP(+) contacts are provided by residues 129–133 and Phe-221; that span reads GAGGA. Tyr-223 is a binding site for shikimate. Gly-242 serves as a coordination point for NADP(+).

It belongs to the shikimate dehydrogenase family. As to quaternary structure, homodimer.

The enzyme catalyses shikimate + NADP(+) = 3-dehydroshikimate + NADPH + H(+). It functions in the pathway metabolic intermediate biosynthesis; chorismate biosynthesis; chorismate from D-erythrose 4-phosphate and phosphoenolpyruvate: step 4/7. Its function is as follows. Involved in the biosynthesis of the chorismate, which leads to the biosynthesis of aromatic amino acids. Catalyzes the reversible NADPH linked reduction of 3-dehydroshikimate (DHSA) to yield shikimate (SA). The sequence is that of Shikimate dehydrogenase (NADP(+)) from Anaeromyxobacter sp. (strain K).